A 73-amino-acid chain; its full sequence is Putative membrane protein insertion efficiency factor (73 aa).

This sequence belongs to the UPF0161 family.

The protein resides in the cell inner membrane. Its function is as follows. Could be involved in insertion of integral membrane proteins into the membrane. The sequence is that of Putative membrane protein insertion efficiency factor from Parabacteroides distasonis (strain ATCC 8503 / DSM 20701 / CIP 104284 / JCM 5825 / NCTC 11152).